Here is a 952-residue protein sequence, read N- to C-terminus: Valine--tRNA ligase (952 aa).

The short motif at 42 to 52 is the 'HIGH' region element; sequence PNVTGSLHMGH. The 'KMSKS' region signature appears at 554–558; sequence KMSKS. Position 557 (Lys-557) interacts with ATP. The stretch at 888-952 forms a coiled coil; that stretch reads AELARLDGEI…EEQKKTIAAL (65 aa).

It belongs to the class-I aminoacyl-tRNA synthetase family. ValS type 1 subfamily. Monomer.

Its subcellular location is the cytoplasm. It carries out the reaction tRNA(Val) + L-valine + ATP = L-valyl-tRNA(Val) + AMP + diphosphate. Catalyzes the attachment of valine to tRNA(Val). As ValRS can inadvertently accommodate and process structurally similar amino acids such as threonine, to avoid such errors, it has a 'posttransfer' editing activity that hydrolyzes mischarged Thr-tRNA(Val) in a tRNA-dependent manner. In Vibrio parahaemolyticus serotype O3:K6 (strain RIMD 2210633), this protein is Valine--tRNA ligase.